Here is a 642-residue protein sequence, read N- to C-terminus: Threonine--tRNA ligase (642 aa).

In terms of domain architecture, TGS spans 1-61 (MIKVTFPDGN…EHDGKLQLLT (61 aa)). A catalytic region spans residues 240 to 539 (DHRKIGKDLD…LIEEYKGSFP (300 aa)). The Zn(2+) site is built by C334, H385, and H516.

Belongs to the class-II aminoacyl-tRNA synthetase family. Homodimer. Zn(2+) is required as a cofactor.

It is found in the cytoplasm. It catalyses the reaction tRNA(Thr) + L-threonine + ATP = L-threonyl-tRNA(Thr) + AMP + diphosphate + H(+). Functionally, catalyzes the attachment of threonine to tRNA(Thr) in a two-step reaction: L-threonine is first activated by ATP to form Thr-AMP and then transferred to the acceptor end of tRNA(Thr). Also edits incorrectly charged L-seryl-tRNA(Thr). This is Threonine--tRNA ligase from Acholeplasma laidlawii (strain PG-8A).